A 321-amino-acid polypeptide reads, in one-letter code: Cytochrome c biogenesis protein CcsA (321 aa).

The next 7 helical transmembrane spans lie at 17–37 (IISIVITIHLVTLLVHEIVGL), 43–63 (KGMIAAFFCITGLLVTRWIYS), 71–91 (LYESLMFLSWSFSIIHMVPKI), 143–163 (MLLSYAALLCGSLLSVALLVI), 225–245 (VISLGFTFLTIGILSGAVWAN), 258–273 (ETWAFITWTIFAIYLH), and 286–306 (AIVASMGFLIIWICYFGVNLL).

It belongs to the CcmF/CycK/Ccl1/NrfE/CcsA family. In terms of assembly, may interact with Ccs1.

The protein localises to the plastid. The protein resides in the chloroplast thylakoid membrane. Its function is as follows. Required during biogenesis of c-type cytochromes (cytochrome c6 and cytochrome f) at the step of heme attachment. The sequence is that of Cytochrome c biogenesis protein CcsA from Liriodendron tulipifera (Tuliptree).